The following is a 226-amino-acid chain: Pathogenesis-related protein R major form (226 aa).

The signal sequence occupies residues 1–25 (MNFLKSFPFFAFLYFGQYFVAVTHA). 8 cysteine pairs are disulfide-bonded: C34–C225, C75–C85, C90–C96, C140–C214, C145–C197, C153–C163, C167–C176, and C177–C184.

It belongs to the thaumatin family.

It localises to the vacuole. The sequence is that of Pathogenesis-related protein R major form from Nicotiana tabacum (Common tobacco).